We begin with the raw amino-acid sequence, 364 residues long: Fructose-bisphosphate aldolase C (364 aa).

A Phosphotyrosine modification is found at Y5. A phosphoserine mark is found at S36, S39, and S45. R56 lines the substrate pocket. K111 carries the N6-acetyllysine modification. S132 carries the phosphoserine modification. K147 provides a ligand contact to substrate. The Proton acceptor role is filled by E188. K230 serves as the catalytic Schiff-base intermediate with dihydroxyacetone-P.

Belongs to the class I fructose-bisphosphate aldolase family. In terms of assembly, homotetramer. Interacts with ATP6V1E1. May interact with PLD2.

It catalyses the reaction beta-D-fructose 1,6-bisphosphate = D-glyceraldehyde 3-phosphate + dihydroxyacetone phosphate. It functions in the pathway carbohydrate degradation; glycolysis; D-glyceraldehyde 3-phosphate and glycerone phosphate from D-glucose: step 4/4. The sequence is that of Fructose-bisphosphate aldolase C (ALDOC) from Homo sapiens (Human).